Reading from the N-terminus, the 469-residue chain is uncharacterized protein (469 aa).

One can recognise an HTH gntR-type domain in the interval 13-81 (TPLYEQLYTF…PKIGWFAAEV (69 aa)). Residues 41–60 (KRRLSSLLDVSTATIERAYE) constitute a DNA-binding region (H-T-H motif). Lys-309 carries the post-translational modification N6-(pyridoxal phosphate)lysine.

This sequence in the C-terminal section; belongs to the class-I pyridoxal-phosphate-dependent aminotransferase family. Requires pyridoxal 5'-phosphate as cofactor.

This is an uncharacterized protein from Bacillus subtilis (strain 168).